We begin with the raw amino-acid sequence, 57 residues long: uncharacterized protein (57 aa).

Residues Gly-21–Ser-37 traverse the membrane as a helical segment.

It is found in the host membrane. This is an uncharacterized protein from Human herpesvirus 6B (strain Z29) (HHV-6 variant B).